Consider the following 243-residue polypeptide: Methylthioribulose-1-phosphate dehydratase (243 aa).

The interval 1 to 22 (MCPADQTVATNNNDHLVQSEDP) is disordered. Residues 7-16 (TVATNNNDHL) show a composition bias toward polar residues. Position 103 (Cys103) interacts with substrate. Zn(2+) is bound by residues His120 and His122. The active-site Proton donor/acceptor is the Glu149. His205 provides a ligand contact to Zn(2+).

The protein belongs to the aldolase class II family. MtnB subfamily. It depends on Zn(2+) as a cofactor.

Its subcellular location is the cytoplasm. The catalysed reaction is 5-(methylsulfanyl)-D-ribulose 1-phosphate = 5-methylsulfanyl-2,3-dioxopentyl phosphate + H2O. It participates in amino-acid biosynthesis; L-methionine biosynthesis via salvage pathway; L-methionine from S-methyl-5-thio-alpha-D-ribose 1-phosphate: step 2/6. Its function is as follows. Catalyzes the dehydration of methylthioribulose-1-phosphate (MTRu-1-P) into 2,3-diketo-5-methylthiopentyl-1-phosphate (DK-MTP-1-P). The protein is Methylthioribulose-1-phosphate dehydratase of Penicillium rubens (strain ATCC 28089 / DSM 1075 / NRRL 1951 / Wisconsin 54-1255) (Penicillium chrysogenum).